Consider the following 146-residue polypeptide: Cytochrome b5 type B (146 aa).

Positions 1-11 (MATPEASGSGR) are excised as a propeptide. The 77-residue stretch at 20-96 (VTYYRLEEVA…LKQYYIGDVH (77 aa)) folds into the Cytochrome b5 heme-binding domain. At K30 the chain carries N6-acetyllysine. Heme contacts are provided by H55 and H79. The residue at position 80 (S80) is a Phosphoserine. A helical membrane pass occupies residues 119 to 136 (WAYWIVPIVGAILIGFLY).

Belongs to the cytochrome b5 family. In terms of assembly, component of a complex composed of cytochrome b5, NADH-cytochrome b5 reductase (CYB5R3) and MTARC2.

It localises to the mitochondrion outer membrane. Functionally, cytochrome b5 is a membrane-bound hemoprotein functioning as an electron carrier for several membrane-bound oxygenases. The polypeptide is Cytochrome b5 type B (Cyb5b) (Rattus norvegicus (Rat)).